Reading from the N-terminus, the 581-residue chain is Chaperonin GroEL 1 (581 aa).

ATP-binding positions include 29-32, 86-90, Gly-413, and Asp-492; these read TIGP and DGTTT. The tract at residues 522–543 is disordered; it reads PEPEPAAPGGPSGDPMGGMGGM. The span at 531 to 543 shows a compositional bias: gly residues; the sequence is GPSGDPMGGMGGM.

The protein belongs to the chaperonin (HSP60) family. As to quaternary structure, forms a cylinder of 14 subunits composed of two heptameric rings stacked back-to-back. Interacts with the co-chaperonin GroES.

It is found in the cytoplasm. It catalyses the reaction ATP + H2O + a folded polypeptide = ADP + phosphate + an unfolded polypeptide.. In terms of biological role, together with its co-chaperonin GroES, plays an essential role in assisting protein folding. The GroEL-GroES system forms a nano-cage that allows encapsulation of the non-native substrate proteins and provides a physical environment optimized to promote and accelerate protein folding. The sequence is that of Chaperonin GroEL 1 from Prochlorococcus marinus (strain MIT 9215).